A 401-amino-acid chain; its full sequence is Exodeoxyribonuclease 7 large subunit (401 aa).

The protein belongs to the XseA family. As to quaternary structure, heterooligomer composed of large and small subunits.

Its subcellular location is the cytoplasm. The enzyme catalyses Exonucleolytic cleavage in either 5'- to 3'- or 3'- to 5'-direction to yield nucleoside 5'-phosphates.. Bidirectionally degrades single-stranded DNA into large acid-insoluble oligonucleotides, which are then degraded further into small acid-soluble oligonucleotides. In Clostridium botulinum (strain Langeland / NCTC 10281 / Type F), this protein is Exodeoxyribonuclease 7 large subunit.